The sequence spans 340 residues: N-acetyl-gamma-glutamyl-phosphate reductase (340 aa).

The active site involves Cys-146.

This sequence belongs to the NAGSA dehydrogenase family. Type 1 subfamily.

The protein localises to the cytoplasm. It catalyses the reaction N-acetyl-L-glutamate 5-semialdehyde + phosphate + NADP(+) = N-acetyl-L-glutamyl 5-phosphate + NADPH + H(+). It participates in amino-acid biosynthesis; L-arginine biosynthesis; N(2)-acetyl-L-ornithine from L-glutamate: step 3/4. Its function is as follows. Catalyzes the NADPH-dependent reduction of N-acetyl-5-glutamyl phosphate to yield N-acetyl-L-glutamate 5-semialdehyde. The protein is N-acetyl-gamma-glutamyl-phosphate reductase of Streptococcus mutans serotype c (strain ATCC 700610 / UA159).